Consider the following 97-residue polypeptide: Ferredoxin-like protein YdiT (97 aa).

It belongs to the bacterial-type ferredoxin family. FixX subfamily.

Could be a 3Fe-4S cluster-containing protein. Probably participates in a redox process with YdiQ, YdiR and YdiS. The polypeptide is Ferredoxin-like protein YdiT (ydiT) (Escherichia coli (strain K12)).